The chain runs to 156 residues: Flagellar assembly factor FliW (156 aa).

Belongs to the FliW family. In terms of assembly, interacts with translational regulator CsrA and flagellin(s).

It is found in the cytoplasm. In terms of biological role, acts as an anti-CsrA protein, binds CsrA and prevents it from repressing translation of its target genes, one of which is flagellin. Binds to flagellin and participates in the assembly of the flagellum. In Pseudothermotoga lettingae (strain ATCC BAA-301 / DSM 14385 / NBRC 107922 / TMO) (Thermotoga lettingae), this protein is Flagellar assembly factor FliW.